Reading from the N-terminus, the 139-residue chain is S-adenosyl-L-methionine-binding protein AF_0241 (139 aa).

The 131-residue stretch at 3-133 (LKPIGVVKSP…YSPEIDCVNQ (131 aa)) folds into the TsaA-like domain. S-adenosyl-L-methionine is bound by residues Gln16, 20 to 22 (PRQ), 58 to 59 (DK), Arg82, Leu92, and 113 to 116 (LDGS).

This sequence belongs to the tRNA methyltransferase O family. In terms of assembly, homodimer.

This Archaeoglobus fulgidus (strain ATCC 49558 / DSM 4304 / JCM 9628 / NBRC 100126 / VC-16) protein is S-adenosyl-L-methionine-binding protein AF_0241.